Consider the following 870-residue polypeptide: DNA mismatch repair protein MutS (870 aa).

Glycine 617–serine 624 is an ATP binding site.

This sequence belongs to the DNA mismatch repair MutS family.

Its function is as follows. This protein is involved in the repair of mismatches in DNA. It is possible that it carries out the mismatch recognition step. This protein has a weak ATPase activity. This Phocaeicola vulgatus (strain ATCC 8482 / DSM 1447 / JCM 5826 / CCUG 4940 / NBRC 14291 / NCTC 11154) (Bacteroides vulgatus) protein is DNA mismatch repair protein MutS.